Here is a 77-residue protein sequence, read N- to C-terminus: ATP synthase subunit c (77 aa).

2 helical membrane-spanning segments follow: residues 13-33 (IATV…GIVA) and 55-75 (FLGI…YFIF).

Belongs to the ATPase C chain family. As to quaternary structure, F-type ATPases have 2 components, F(1) - the catalytic core - and F(0) - the membrane proton channel. F(1) has five subunits: alpha(3), beta(3), gamma(1), delta(1), epsilon(1). F(0) has three main subunits: a(1), b(2) and c(10-14). The alpha and beta chains form an alternating ring which encloses part of the gamma chain. F(1) is attached to F(0) by a central stalk formed by the gamma and epsilon chains, while a peripheral stalk is formed by the delta and b chains.

It is found in the cell membrane. In terms of biological role, f(1)F(0) ATP synthase produces ATP from ADP in the presence of a proton or sodium gradient. F-type ATPases consist of two structural domains, F(1) containing the extramembraneous catalytic core and F(0) containing the membrane proton channel, linked together by a central stalk and a peripheral stalk. During catalysis, ATP synthesis in the catalytic domain of F(1) is coupled via a rotary mechanism of the central stalk subunits to proton translocation. Its function is as follows. Key component of the F(0) channel; it plays a direct role in translocation across the membrane. A homomeric c-ring of between 10-14 subunits forms the central stalk rotor element with the F(1) delta and epsilon subunits. The chain is ATP synthase subunit c from Clavibacter michiganensis subsp. michiganensis (strain NCPPB 382).